Reading from the N-terminus, the 105-residue chain is ATP synthase subunit c (105 aa).

Helical transmembrane passes span 3–23, 32–52, and 78–98; these read FLSL…GGMG, SILG…IGMG, and VAMA…IIAI.

It belongs to the ATPase C chain family. As to quaternary structure, F-type ATPases have 2 components, F(1) - the catalytic core - and F(0) - the membrane proton channel. F(1) has five subunits: alpha(3), beta(3), gamma(1), delta(1), epsilon(1). F(0) has three main subunits: a(1), b(2) and c(10-14). The alpha and beta chains form an alternating ring which encloses part of the gamma chain. F(1) is attached to F(0) by a central stalk formed by the gamma and epsilon chains, while a peripheral stalk is formed by the delta and b chains.

It is found in the cell inner membrane. F(1)F(0) ATP synthase produces ATP from ADP in the presence of a proton or sodium gradient. F-type ATPases consist of two structural domains, F(1) containing the extramembraneous catalytic core and F(0) containing the membrane proton channel, linked together by a central stalk and a peripheral stalk. During catalysis, ATP synthesis in the catalytic domain of F(1) is coupled via a rotary mechanism of the central stalk subunits to proton translocation. In terms of biological role, key component of the F(0) channel; it plays a direct role in translocation across the membrane. A homomeric c-ring of between 10-14 subunits forms the central stalk rotor element with the F(1) delta and epsilon subunits. This is ATP synthase subunit c from Helicobacter pylori (strain Shi470).